We begin with the raw amino-acid sequence, 132 residues long: Large ribosomal subunit protein uL14 (132 aa).

It belongs to the universal ribosomal protein uL14 family. As to quaternary structure, part of the 50S ribosomal subunit. Forms a cluster with proteins L3 and L24e, part of which may contact the 16S rRNA in 2 intersubunit bridges.

Its function is as follows. Binds to 23S rRNA. Forms part of two intersubunit bridges in the 70S ribosome. This chain is Large ribosomal subunit protein uL14, found in Methanothrix thermoacetophila (strain DSM 6194 / JCM 14653 / NBRC 101360 / PT) (Methanosaeta thermophila).